The following is a 771-amino-acid chain: Solute carrier family 7 member 14 (771 aa).

6 helical membrane-spanning segments follow: residues 58 to 78 (LISL…SGLV), 83 to 103 (AGPG…LSGV), 130 to 150 (FVAF…TAAG), 187 to 207 (YPDL…ALGV), 216 to 236 (VLNV…FFFI), and 251 to 271 (WSGV…FDII). N-linked (GlcNAc...) asparagine glycosylation is present at Asn282. 5 helical membrane-spanning segments follow: residues 291–311 (ASLV…TLMV), 336–356 (FVVA…SLFP), 360–380 (VIYA…VSSY), 384–404 (PVVA…LVSL), and 407–427 (LIEM…VCVL). A phosphoserine mark is found at Ser465, Ser468, and Ser488. The next 4 membrane-spanning stretches (helical) occupy residues 565 to 585 (VTIC…FIIF), 596 to 616 (WAIL…FVIL), 628 to 648 (MAPC…YLML), and 655 to 675 (WIRF…YGIW). A glycan (N-linked (GlcNAc...) asparagine) is linked at Asn676. Positions 712-771 (TEGESQENWGGPAEDKGFYYQQMSDTQPNTRTSSKAKSKSKHKQNSEALIANDELDYSPE) are disordered. Residues 732 to 743 (QQMSDTQPNTRT) are compositionally biased toward polar residues. Residues 745-754 (SKAKSKSKHK) show a composition bias toward basic residues. Phosphoserine is present on residues Ser757 and Ser769.

The protein belongs to the amino acid-polyamine-organocation (APC) superfamily. Cationic amino acid transporter (CAT) (TC 2.A.3.3) family.

The protein resides in the lysosome membrane. The enzyme catalyses 4-aminobutanoate(in) = 4-aminobutanoate(out). In terms of biological role, imports 4-aminobutanoate (GABA) into lysosomes. May act as a GABA sensor that regulates mTORC2-dependent INS signaling and gluconeogenesis. The transport mechanism and substrate selectivity remain to be elucidated. This chain is Solute carrier family 7 member 14, found in Bos taurus (Bovine).